The primary structure comprises 315 residues: Lipoyl synthase (315 aa).

[4Fe-4S] cluster contacts are provided by Cys-63, Cys-68, Cys-74, Cys-89, Cys-93, Cys-96, and Ser-303. The Radical SAM core domain occupies 75–292 (FSHGTATFMI…EKKAYDMGFR (218 aa)).

It belongs to the radical SAM superfamily. Lipoyl synthase family. [4Fe-4S] cluster serves as cofactor.

Its subcellular location is the cytoplasm. It carries out the reaction [[Fe-S] cluster scaffold protein carrying a second [4Fe-4S](2+) cluster] + N(6)-octanoyl-L-lysyl-[protein] + 2 oxidized [2Fe-2S]-[ferredoxin] + 2 S-adenosyl-L-methionine + 4 H(+) = [[Fe-S] cluster scaffold protein] + N(6)-[(R)-dihydrolipoyl]-L-lysyl-[protein] + 4 Fe(3+) + 2 hydrogen sulfide + 2 5'-deoxyadenosine + 2 L-methionine + 2 reduced [2Fe-2S]-[ferredoxin]. It participates in protein modification; protein lipoylation via endogenous pathway; protein N(6)-(lipoyl)lysine from octanoyl-[acyl-carrier-protein]: step 2/2. In terms of biological role, catalyzes the radical-mediated insertion of two sulfur atoms into the C-6 and C-8 positions of the octanoyl moiety bound to the lipoyl domains of lipoate-dependent enzymes, thereby converting the octanoylated domains into lipoylated derivatives. This chain is Lipoyl synthase, found in Laribacter hongkongensis (strain HLHK9).